A 215-amino-acid polypeptide reads, in one-letter code: UPF0502 protein YceH (215 aa).

At lysine 80 the chain carries N6-acetyllysine.

Belongs to the UPF0502 family.

In Escherichia coli O81 (strain ED1a), this protein is UPF0502 protein YceH.